A 156-amino-acid chain; its full sequence is Holliday junction resolvase (156 aa).

Belongs to the RuvC family. Poxviruses-type subfamily. The cofactor is Mg(2+).

Nuclease that specifically cleaves and resolves four-way DNA Holliday junctions into linear duplex products. The chain is Holliday junction resolvase from Vertebrata (FPV).